The chain runs to 330 residues: MSQNTLKVHDLNEDAEFDENGVEAFDEKALSEEEPSDNDLAEEELLSQGATQRVLDATQLYLGEIGYSPLLTAEEEVYFARRALRGDVASRRRMIESNLRLVVKIARRYGNRGLALLDLIEEGNLGLIRAVEKFDPERGFRFSTYATWWIRQTIERAIMNQTRTIRLPIHIVKELNVYLRTARELSHKLDHEPSAEEIAEQLDKPVDDVSRMLRLNERITSVDTPLGGDSEKALLDILADEKENGPEDTTQDDDMKQSIVKWLFELNAKQREVLARRFGLLGYEAATLEDVGREIGLTRERVRQIQVEGLRRLREILQTQGLNIEALFRE.

Residues 56–89 are sigma-70 factor domain-1; it reads DATQLYLGEIGYSPLLTAEEEVYFARRALRGDVA. Residues 94 to 164 are sigma-70 factor domain-2; sequence MIESNLRLVV…ERAIMNQTRT (71 aa). An Interaction with polymerase core subunit RpoC motif is present at residues 118–121; that stretch reads DLIE. The sigma-70 factor domain-3 stretch occupies residues 174-249; the sequence is ELNVYLRTAR…DEKENGPEDT (76 aa). Positions 262 to 315 are sigma-70 factor domain-4; sequence WLFELNAKQREVLARRFGLLGYEAATLEDVGREIGLTRERVRQIQVEGLRRLRE. The segment at residues 288–307 is a DNA-binding region (H-T-H motif); sequence LEDVGREIGLTRERVRQIQV.

It belongs to the sigma-70 factor family. RpoS subfamily. As to quaternary structure, interacts with the RNA polymerase core enzyme.

It localises to the cytoplasm. In terms of biological role, sigma factors are initiation factors that promote the attachment of RNA polymerase to specific initiation sites and are then released. This sigma factor is the master transcriptional regulator of the stationary phase and the general stress response. In Salmonella dublin, this protein is RNA polymerase sigma factor RpoS.